Here is a 280-residue protein sequence, read N- to C-terminus: 1-cyclohexenylcarbonyl-CoA reductase (280 aa).

Residues 22–25 (SRGI), 71–72 (DV), and Asn-98 contribute to the NADP(+) site. Catalysis depends on proton acceptor residues Tyr-158 and Lys-165. NADP(+) contacts are provided by residues Lys-165 and 194–196 (IDS).

The protein belongs to the short-chain dehydrogenases/reductases (SDR) family. Homodimer.

The enzyme catalyses (4R,5R)-4,5-dihydroxycyclohex-2-ene-1-carbonyl-CoA + NADP(+) = (3R,4R)-3,4-dihydroxycyclohexa-1,5-diene-1-carbonyl-CoA + NADPH + H(+). It catalyses the reaction (3S)-3-hydroxycyclohexane-1-carbonyl-CoA + NADP(+) = (5S)-5-hydroxycyclohex-1-ene-1-carbonyl-CoA + NADPH + H(+). The catalysed reaction is cyclohexane-1-carbonyl-CoA + NADP(+) = cyclohex-1-ene-1-carbonyl-CoA + NADPH + H(+). It participates in antibiotic biosynthesis. Its activity is regulated as follows. Inhibited by the thiol inhibitors p-chloromercuribenzoate, N-ethylmaleimide and iodoacetamide. Also inhibited by various divalent cations. Involved in the biosynthesis of the antifungal antibiotic ansatrienin A (mycotrienin I). Catalyzes three of the reductive steps involved in the formation of the cyclohexanecarboxylic acid (CHC) moiety of ansatrienin from shikimic acid. Can use 3,4-dihydroxycyclohexa-1,5-diene-1-carbonyl-CoA, 5-hydroxycyclohex-1-ene-1-carbonyl-CoA and cyclohex-1-ene-1-carbonyl-CoA as substrates. The protein is 1-cyclohexenylcarbonyl-CoA reductase of Streptomyces collinus.